Consider the following 589-residue polypeptide: 2-succinyl-5-enolpyruvyl-6-hydroxy-3-cyclohexene-1-carboxylate synthase (589 aa).

The disordered stretch occupies residues 198–222 (DAATTEGAHDSHAPSQPTRGPRKLP).

It belongs to the TPP enzyme family. MenD subfamily. Homodimer. Requires Mg(2+) as cofactor. Mn(2+) serves as cofactor. It depends on thiamine diphosphate as a cofactor.

It carries out the reaction isochorismate + 2-oxoglutarate + H(+) = 5-enolpyruvoyl-6-hydroxy-2-succinyl-cyclohex-3-ene-1-carboxylate + CO2. Its pathway is quinol/quinone metabolism; 1,4-dihydroxy-2-naphthoate biosynthesis; 1,4-dihydroxy-2-naphthoate from chorismate: step 2/7. It participates in quinol/quinone metabolism; menaquinone biosynthesis. Catalyzes the thiamine diphosphate-dependent decarboxylation of 2-oxoglutarate and the subsequent addition of the resulting succinic semialdehyde-thiamine pyrophosphate anion to isochorismate to yield 2-succinyl-5-enolpyruvyl-6-hydroxy-3-cyclohexene-1-carboxylate (SEPHCHC). This chain is 2-succinyl-5-enolpyruvyl-6-hydroxy-3-cyclohexene-1-carboxylate synthase, found in Corynebacterium jeikeium (strain K411).